The following is a 235-amino-acid chain: Carboxy-S-adenosyl-L-methionine synthase (235 aa).

Residues Y35, 60–62 (GCS), 83–84 (DN), N124, and R191 contribute to the S-adenosyl-L-methionine site.

The protein belongs to the class I-like SAM-binding methyltransferase superfamily. Cx-SAM synthase family. Homodimer.

It carries out the reaction prephenate + S-adenosyl-L-methionine = carboxy-S-adenosyl-L-methionine + 3-phenylpyruvate + H2O. Functionally, catalyzes the conversion of S-adenosyl-L-methionine (SAM) to carboxy-S-adenosyl-L-methionine (Cx-SAM). The protein is Carboxy-S-adenosyl-L-methionine synthase of Campylobacter jejuni subsp. jejuni serotype O:23/36 (strain 81-176).